Consider the following 622-residue polypeptide: Carbon monoxide dehydrogenase (622 aa).

Positions 40, 49, 52, 57, and 68 each coordinate [4Fe-4S] cluster. His256, Cys334, Cys442, Cys473, and Cys514 together coordinate [Ni-4Fe-5S] cluster.

It belongs to the Ni-containing carbon monoxide dehydrogenase family. Homodimer. It depends on [4Fe-4S] cluster as a cofactor. Requires [Ni-4Fe-5S] cluster as cofactor.

The enzyme catalyses CO + 2 oxidized [2Fe-2S]-[ferredoxin] + H2O = 2 reduced [2Fe-2S]-[ferredoxin] + CO2 + 2 H(+). Functionally, CODH oxidizes carbon monoxide coupled, via CooF, to the reduction of a hydrogen cation by a hydrogenase (possibly CooH). The polypeptide is Carbon monoxide dehydrogenase (cooS) (Archaeoglobus fulgidus (strain ATCC 49558 / DSM 4304 / JCM 9628 / NBRC 100126 / VC-16)).